The primary structure comprises 999 residues: Translation initiation factor IF-2 (999 aa).

A disordered region spans residues 50 to 407 (AFVNNTGSPA…RGQGQTVRLS (358 aa)). Pro residues-rich tracts occupy residues 60-89 (PAAPPAATPPTPTPTPTPPRTPTPAPPPGG) and 96-121 (PMPPRRPGAPTPGPKPKGPVPGPPQS). The span at 136-162 (VAAAEARAAALKAEQEAAVKAAQAARQ) shows a compositional bias: low complexity. Positions 163 to 173 (QQRDNVRREPP) are enriched in basic and acidic residues. Pro residues predominate over residues 179 to 194 (RPGPRPGPGAMPPRPG). Residues 213–222 (GGRPPARGAG) are compositionally biased toward low complexity. The segment covering 244–266 (RPSPASMPPRPSPASMPPRPSPA) has biased composition (pro residues). Residues 275–367 (RPGGPGSGRP…GAAGAFGRPG (93 aa)) show a composition bias toward gly residues. The segment covering 371 to 380 (TRGRKSKKQR) has biased composition (basic residues). The segment covering 388–405 (SAPTMSSGAPRGQGQTVR) has biased composition (polar residues). The region spanning 490-662 (SRPPVVTVMG…VLLTADASLE (173 aa)) is the tr-type G domain. Residues 499-506 (GHVDHGKT) form a G1 region. 499–506 (GHVDHGKT) contacts GTP. Positions 524–528 (GITQH) are G2. The segment at 549-552 (DTPG) is G3. GTP is bound by residues 549 to 553 (DTPGH) and 603 to 606 (NKID). Residues 603–606 (NKID) form a G4 region. The segment at 639–641 (AAK) is G5.

Belongs to the TRAFAC class translation factor GTPase superfamily. Classic translation factor GTPase family. IF-2 subfamily.

It is found in the cytoplasm. One of the essential components for the initiation of protein synthesis. Protects formylmethionyl-tRNA from spontaneous hydrolysis and promotes its binding to the 30S ribosomal subunits. Also involved in the hydrolysis of GTP during the formation of the 70S ribosomal complex. This chain is Translation initiation factor IF-2, found in Salinispora tropica (strain ATCC BAA-916 / DSM 44818 / JCM 13857 / NBRC 105044 / CNB-440).